The sequence spans 23 residues: Cytochrome c oxidase subunit 7A1, mitochondrial (23 aa).

Belongs to the cytochrome c oxidase VIIa family. As to quaternary structure, component of the complex IV (CIV, cytochrome c oxidase), a multisubunit enzyme composed of 14 subunits. The complex is composed of a catalytic core of 3 subunits MT-CO1, MT-CO2 and MT-CO3, encoded in the mitochondrial DNA, and 11 supernumerary subunits COX4I1 (or COX4I2), COX5A, COX5B, COX6A2 (or COX6A1), COX6B1 (or COX6B2), COX6C, COX7A1 (or COX7A2), COX7B, COX7C, COX8B and NDUFA4, which are encoded in the nuclear genome. The complex exists as a monomer or a dimer and forms supercomplexes (SCs) in the inner mitochondrial membrane with NADH-ubiquinone oxidoreductase (complex I, CI) and ubiquinol-cytochrome c oxidoreductase (cytochrome b-c1 complex, complex III, CIII), resulting in different assemblies (supercomplex SCI(1)III(2)IV(1) and megacomplex MCI(2)III(2)IV(2)).

It is found in the mitochondrion inner membrane. The protein operates within energy metabolism; oxidative phosphorylation. Functionally, component of the mitochondrial respiratory complex IV (CIV, also named cytochrome c oxidase complex), the last enzyme in the mitochondrial electron transport chain which drives oxidative phosphorylation. The CIV complex is the component of the respiratory chain that catalyzes the reduction of oxygen to water. Acts as an assembly factor that specifically drives the homodimerization of CIV complexes, mediating the formation of mitochondrial respiratory supercomplexes (respirasomes) containing two CIV: supercomplxes with two molecules of CIV show improved activity. Despite being highly expressed in brown adipose tissue, not required for thermogenesis. This is Cytochrome c oxidase subunit 7A1, mitochondrial (COX7A1) from Canis lupus familiaris (Dog).